The following is a 536-amino-acid chain: Probable protein S-acyltransferase 23 (536 aa).

A disordered region spans residues 1-23; it reads MDSSEIEVVPLDSNSHQSPTESP. Polar residues predominate over residues 12–23; it reads DSNSHQSPTESP. 6 ANK repeats span residues 57–86, 90–119, 123–153, 157–186, 190–219, and 225–254; these read NGFY…DVNS, IQQT…RIEA, NGFR…DYNA, EGRS…CQNR, TGCT…KEEL, and TGST…TRKN. A run of 2 helical transmembrane segments spans residues 270–290 and 298–318; these read YAPM…TSIV and ITAM…YALI. One can recognise a DHHC domain in the interval 363 to 413; it reads QLCPTCKIIRPVRSKHCPTCKRCVEQFDHHCPWISNCVGKKNKRYFLVFVI. Cys393 serves as the catalytic S-palmitoyl cysteine intermediate. 2 helical membrane-spanning segments follow: residues 407-427 and 454-474; these read YFLV…TTAV and AAVF…LTIS.

Belongs to the DHHC palmitoyltransferase family. As to expression, expressed in roots, shoots, flowers and pollen.

It is found in the golgi apparatus membrane. The enzyme catalyses L-cysteinyl-[protein] + hexadecanoyl-CoA = S-hexadecanoyl-L-cysteinyl-[protein] + CoA. Palmitoyl acyltransferase. This is Probable protein S-acyltransferase 23 (PAT23) from Arabidopsis thaliana (Mouse-ear cress).